The primary structure comprises 242 residues: Demethylmenaquinone methyltransferase (242 aa).

S-adenosyl-L-methionine is bound by residues Thr62, Asp83, and 112–113; that span reads DV.

This sequence belongs to the class I-like SAM-binding methyltransferase superfamily. MenG/UbiE family.

The catalysed reaction is a 2-demethylmenaquinol + S-adenosyl-L-methionine = a menaquinol + S-adenosyl-L-homocysteine + H(+). Its pathway is quinol/quinone metabolism; menaquinone biosynthesis; menaquinol from 1,4-dihydroxy-2-naphthoate: step 2/2. Methyltransferase required for the conversion of demethylmenaquinol (DMKH2) to menaquinol (MKH2). This chain is Demethylmenaquinone methyltransferase, found in Protochlamydia amoebophila (strain UWE25).